The chain runs to 369 residues: Trans-enoyl reductase pyiC (369 aa).

52–55 (CDYK) lines the NADP(+) pocket. 137–144 (TGIGTLGM) contacts substrate. Residues 195 to 198 (SPKN), Tyr213, and 260 to 261 (LE) contribute to the NADP(+) site. 280–284 (GPLLL) serves as a coordination point for substrate. 349 to 350 (VS) lines the NADP(+) pocket.

This sequence belongs to the zinc-containing alcohol dehydrogenase family. As to quaternary structure, monomer.

It participates in mycotoxin biosynthesis. Trans-enoyl reductase; part of the gene cluster that mediates the biosynthesis of the mycotoxin pyrichalasin H, a tyrosine-derived cytochalasan that inhibits the growth of rice seedlings, but also inhibits lymphocyte capping and actin polymerization and alters cell morphology. Pyrichalasin H is indicated as the responsible agent for the genus-specific pathogenicity of M.grisea toward crabgrass. The first step in the pathway is catalyzed by the O-methyltransferase pyiA which methylates free tyrosine to generate the precursor O-methyltyrosine. The hybrid PKS-NRPS pyiS, assisted by the enoyl reductase pyiC, are responsible for fusion of the O-methyltyrosine precursor and the polyketide backbone. The polyketide synthase module (PKS) of pyiS is responsible for the synthesis of the polyketide backbone and the downstream nonribosomal peptide synthetase (NRPS) amidates the carboxyl end of the polyketide with the O-methyltyrosine precursor. As the NRPS A-domain demonstrates substrate tolerance, pyiS can also use phenylalanine, tyrosine and even para-chlorophenylalanine as amino acid precursor, which leads to the production of novel cytochalasans, including halogenated cytochalasans. Because pyiS lacks a designated enoylreductase (ER) domain, the required activity is provided the enoyl reductase pyiC. Reduction by the hydrolyase pyiE, followed by dehydration and intra-molecular Diels-Alder cyclization by the Diels-Alderase pyiF then yield the required isoindolone-fused macrocycle. The tailoring cytochrome P450 monooxygenases piyD and piyG catalyze the hydroxylation at C-18 and C-7, respectivily, whereas the short-chain dehydrogenase/reductase pyiH reduces the carbonyl at C-21 in preparation for the transfer of an acetyl group by the acetyltransferase pyiB. These 3 reactions whose order is not clear yet, lead to the production of O-methylpyrichalasin J, a deacetylated pyrichalasin H. Finally, pyiB to converts O-methylpyrichalasin J into the final product pyrichalasin H via acetylation of C-21. The chain is Trans-enoyl reductase pyiC from Pyricularia grisea (Crabgrass-specific blast fungus).